The following is a 326-amino-acid chain: Aldo-keto reductase family 1 member D1 (326 aa).

NADP(+) contacts are provided by residues 22 to 26 (GLGTY) and Asp52. Residue Tyr26 participates in substrate binding. Substrate is bound by residues Tyr57, Trp88, Glu119, and Tyr131. Tyr57 (proton donor) is an active-site residue. Residues 168 to 169 (SN), Gln192, and 219 to 224 (YSPLGT) each bind NADP(+). Residue Trp230 participates in substrate binding. An NADP(+)-binding site is contributed by 273–283 (KSTTPERIKEN).

This sequence belongs to the aldo/keto reductase family. The N-terminus is blocked.

Its subcellular location is the cytoplasm. The catalysed reaction is 5beta-cholestan-3-one + NADP(+) = cholest-4-en-3-one + NADPH + H(+). The enzyme catalyses 4,5beta-dihydrocortisone + NADP(+) = cortisone + NADPH + H(+). It carries out the reaction cortisol + NADPH + H(+) = 5beta-dihydrocortisol + NADP(+). It catalyses the reaction corticosterone + NADPH + H(+) = 5beta-dihydrocorticosterone + NADP(+). The catalysed reaction is 7alpha,12alpha-dihydroxycholest-4-en-3-one + NADPH + H(+) = 7alpha,12alpha-dihydroxy-5beta-cholestan-3-one + NADP(+). The enzyme catalyses 7alpha-hydroxycholest-4-en-3-one + NADPH + H(+) = 7alpha-hydroxy-5beta-cholestan-3-one + NADP(+). It carries out the reaction epitestosterone + NADPH + H(+) = 5beta-dihydroepitestosterone + NADP(+). It catalyses the reaction androst-4-ene-3,17-dione + NADPH + H(+) = 5beta-androstane-3,17-dione + NADP(+). The catalysed reaction is progesterone + NADPH + H(+) = 5beta-pregnan-3,20-dione + NADP(+). The enzyme catalyses 21-hydroxyprogesterone + NADPH + H(+) = 5beta-dihydrodeoxycorticosterone + NADP(+). It carries out the reaction aldosterone + NADPH + H(+) = 5beta-dihydroaldosterone + NADP(+). It catalyses the reaction 17beta-hydroxyandrosta-1,4-dien-3-one + NADPH + H(+) = 17beta-hydroxy-5beta-androst-1-en-3-one + NADP(+). The catalysed reaction is 17beta-hydroxyestr-4-en-3-one + NADPH + H(+) = 17beta-hydroxy-5beta-estran-3-one + NADP(+). The enzyme catalyses 5beta-dihydrotestosterone + NADP(+) = testosterone + NADPH + H(+). It carries out the reaction androst-4-ene-3,11,17-trione + NADPH + H(+) = 17beta-hydroxyandrost-4-ene-3,11-dione + NADP(+). Subject to inhibition by high substrate concentrations. Inhibited by testosterone concentrations above 10 uM. Inhibited by the primary and secondary bile acids chenodeoxycholic acid and ursodeoxycholic acid. In terms of biological role, catalyzes the stereospecific NADPH-dependent reduction of the C4-C5 double bond of bile acid intermediates and steroid hormones carrying a delta(4)-3-one structure to yield an A/B cis-ring junction. This cis-configuration is crucial for bile acid biosynthesis and plays important roles in steroid metabolism. Capable of reducing a broad range of delta-(4)-3-ketosteroids from C18 (such as, 17beta-hydroxyestr-4-en-3-one) to C27 (such as, 7alpha-hydroxycholest-4-en-3-one). The chain is Aldo-keto reductase family 1 member D1 (Akr1d1) from Rattus norvegicus (Rat).